The chain runs to 397 residues: Elongation factor Tu (397 aa).

Positions 10–206 constitute a tr-type G domain; it reads KPHVNIGTIG…AVDENIPQPE (197 aa). Positions 19–26 are G1; the sequence is GHVDHGKT. Residue 19–26 coordinates GTP; the sequence is GHVDHGKT. A Mg(2+)-binding site is contributed by T26. Residues 62–66 are G2; it reads GITIS. Residues 83–86 are G3; that stretch reads DCPG. GTP contacts are provided by residues 83–87 and 138–141; these read DCPGH and NKAD. The segment at 138–141 is G4; it reads NKAD. A G5 region spans residues 176 to 178; sequence SAL.

It belongs to the TRAFAC class translation factor GTPase superfamily. Classic translation factor GTPase family. EF-Tu/EF-1A subfamily. As to quaternary structure, monomer.

It is found in the cytoplasm. It carries out the reaction GTP + H2O = GDP + phosphate + H(+). GTP hydrolase that promotes the GTP-dependent binding of aminoacyl-tRNA to the A-site of ribosomes during protein biosynthesis. This chain is Elongation factor Tu, found in Streptomyces cinnamoneus (Streptoverticillium cinnamoneum).